A 732-amino-acid polypeptide reads, in one-letter code: Protein kinase YpkA (732 aa).

One can recognise a Protein kinase domain in the interval 136 to 408 (VAETDKFAEG…SNEARLHEFL (273 aa)). ATP-binding positions include 142 to 150 (FAEGESHIS) and Lys-163. The active-site Proton acceptor is Asp-270.

It belongs to the protein kinase superfamily. Ser/Thr protein kinase family.

The protein resides in the secreted. It carries out the reaction L-seryl-[protein] + ATP = O-phospho-L-seryl-[protein] + ADP + H(+). The enzyme catalyses L-threonyl-[protein] + ATP = O-phospho-L-threonyl-[protein] + ADP + H(+). In terms of biological role, acts as a virulence determinant. This chain is Protein kinase YpkA (ypkA), found in Yersinia pseudotuberculosis serotype I (strain IP32953).